The following is a 209-amino-acid chain: Pyridoxine/pyridoxamine 5'-phosphate oxidase (209 aa).

Residues 57–62 (RMVLLK), 72–73 (YT), Lys79, and Gln101 contribute to the FMN site. Lys62 is a binding site for substrate. Residues Tyr119, Arg123, and Ser127 each contribute to the substrate site. FMN contacts are provided by residues 136-137 (QS) and Trp181. 187 to 189 (RLH) provides a ligand contact to substrate. Arg191 is an FMN binding site.

Belongs to the pyridoxamine 5'-phosphate oxidase family. In terms of assembly, homodimer. The cofactor is FMN.

It carries out the reaction pyridoxamine 5'-phosphate + O2 + H2O = pyridoxal 5'-phosphate + H2O2 + NH4(+). The enzyme catalyses pyridoxine 5'-phosphate + O2 = pyridoxal 5'-phosphate + H2O2. It functions in the pathway cofactor metabolism; pyridoxal 5'-phosphate salvage; pyridoxal 5'-phosphate from pyridoxamine 5'-phosphate: step 1/1. Its pathway is cofactor metabolism; pyridoxal 5'-phosphate salvage; pyridoxal 5'-phosphate from pyridoxine 5'-phosphate: step 1/1. Its function is as follows. Catalyzes the oxidation of either pyridoxine 5'-phosphate (PNP) or pyridoxamine 5'-phosphate (PMP) into pyridoxal 5'-phosphate (PLP). The chain is Pyridoxine/pyridoxamine 5'-phosphate oxidase from Chelativorans sp. (strain BNC1).